The following is a 187-amino-acid chain: Adenine phosphoribosyltransferase (187 aa).

This sequence belongs to the purine/pyrimidine phosphoribosyltransferase family. Homodimer.

The protein localises to the cytoplasm. The catalysed reaction is AMP + diphosphate = 5-phospho-alpha-D-ribose 1-diphosphate + adenine. The protein operates within purine metabolism; AMP biosynthesis via salvage pathway; AMP from adenine: step 1/1. In terms of biological role, catalyzes a salvage reaction resulting in the formation of AMP, that is energically less costly than de novo synthesis. This Yersinia pseudotuberculosis serotype O:3 (strain YPIII) protein is Adenine phosphoribosyltransferase.